The chain runs to 638 residues: 1-deoxy-D-xylulose-5-phosphate synthase (638 aa).

Residues His71 and 112-114 (SHA) contribute to the thiamine diphosphate site. Residue Asp144 participates in Mg(2+) binding. Thiamine diphosphate is bound by residues 145–146 (GA), Asn173, Tyr284, and Glu365. Asn173 contributes to the Mg(2+) binding site.

The protein belongs to the transketolase family. DXPS subfamily. Homodimer. Mg(2+) serves as cofactor. Requires thiamine diphosphate as cofactor.

The enzyme catalyses D-glyceraldehyde 3-phosphate + pyruvate + H(+) = 1-deoxy-D-xylulose 5-phosphate + CO2. It participates in metabolic intermediate biosynthesis; 1-deoxy-D-xylulose 5-phosphate biosynthesis; 1-deoxy-D-xylulose 5-phosphate from D-glyceraldehyde 3-phosphate and pyruvate: step 1/1. Its function is as follows. Catalyzes the acyloin condensation reaction between C atoms 2 and 3 of pyruvate and glyceraldehyde 3-phosphate to yield 1-deoxy-D-xylulose-5-phosphate (DXP). In Mycobacterium bovis (strain ATCC BAA-935 / AF2122/97), this protein is 1-deoxy-D-xylulose-5-phosphate synthase.